The following is a 132-amino-acid chain: Fatty acid-binding protein 9 (132 aa).

Residues S13, S14, S44, and S91 each carry the phosphoserine modification.

This sequence belongs to the calycin superfamily. Fatty-acid binding protein (FABP) family.

Its subcellular location is the cytoplasm. The sequence is that of Fatty acid-binding protein 9 (FABP9) from Homo sapiens (Human).